Reading from the N-terminus, the 178-residue chain is Signaling threshold-regulating transmembrane adapter 1 (178 aa).

The Extracellular segment spans residues methionine 1–tryptophan 23. A glycan (N-linked (GlcNAc...) asparagine) is linked at asparagine 6. The chain crosses the membrane as a helical; Signal-anchor for type III membrane protein span at residues glycine 24 to leucine 44. Residues serine 45 to serine 178 lie on the Cytoplasmic side of the membrane. Serine 62 and serine 65 each carry phosphoserine. Phosphotyrosine is present on tyrosine 72. Residues tyrosine 72 to leucine 75 form an interaction with GRB2 region. The interval glycine 81–glycine 102 is disordered. Serine 84, serine 87, and serine 89 each carry phosphoserine. The residue at position 109 (tyrosine 109) is a Phosphotyrosine. Threonine 126 is subject to Phosphothreonine. The tract at residues isoleucine 128–valine 133 is interaction with PTPN11. A phosphotyrosine mark is found at tyrosine 130 and tyrosine 151. Residues tyrosine 151–valine 154 are interaction with CSK. Position 164 is a phosphoserine (serine 164). Phosphotyrosine is present on tyrosine 170. The tract at residues tyrosine 170 to serine 173 is interaction with GRB2.

As to quaternary structure, homodimer; disulfide-linked. When phosphorylated, interacts with PTPN11/SHP2, GRB2 and CSK. In terms of processing, phosphorylated on tyrosines upon TCR activation; which promotes recruitment of PTPN11, GRB2 and CSK. As to expression, lymph node, spleen and thymus.

It localises to the cell membrane. Negatively regulates T-cell antigen receptor (TCR)-mediated signaling. Involved in positive selection of T-cells. This is Signaling threshold-regulating transmembrane adapter 1 (Sit1) from Rattus norvegicus (Rat).